A 1617-amino-acid polypeptide reads, in one-letter code: MNMKQKSVYQQTKALLCKNFLKKWRMKRESLLEWGLSILLGLCIALFSSSMRNVQFPGMAPQNLGRVDKFNSSSLMVVYTPISNLTQQIMNKTALAPLLKGTSVIGAPNKTHMDEILLENLPYAMGIIFNETFSYKLIFFQGYNSPLWKEDFSAHCWDGYGEFSCTLTKYWNRGFVALQTAINTAIIEITTNHPVMEELMSVTAITMKTLPFITKNLLHNEMFILFFLLHFSPLVYFISLNVTKERKKSKNLMKMMGLQDSAFWLSWGLIYAGFIFIISIFVTIIITFTQIIVMTGFMVIFILFFLYGLSLVALVFLMSVLLKKAVLTNLVVFLLTLFWGCLGFTVFYEQLPSSLEWILNICSPFAFTTGMIQIIKLDYNLNGVIFPDPSGDSYTMIATFSMLLLDGLIYLLLALYFDKILPYGDERHYSPLFFLNSSSCFQHQRTNAKVIEKEIDAEHPSDDYFEPVAPEFQGKEAIRIRNVKKEYKGKSGKVEALKGLLFDIYEGQITAILGHSGAGKSSLLNILNGLSVPTEGSVTIYNKNLSEMQDLEEIRKITGVCPQFNVQFDILTVKENLSLFAKIKGIHLKEVEQEVQRILLELDMQNIQDNLAKHLSEGQKRKLTFGITILGDPQILLLDEPTTGLDPFSRDQVWSLLRERRADHVILFSTQSMDEADILADRKVIMSNGRLKCAGSSMFLKRRWGLGYHLSLHRNEICNPEQITSFITHHIPDAKLKTENKEKLVYTLPLERTNTFPDLFSDLDKCSDQGVTGYDISMSTLNEVFMKLEGQSTIEQDFEQVEMIRDSESLNEMELAHSSFSEMQTAVSDMGLWRMQVFAMARLRFLKLKRQTKVLLTLLLVFGIAIFPLIVENIMYAMLNEKIDWEFKNELYFLSPGQLPQEPRTSLLIINNTESNIEDFIKSLKHQNILLEVDDFENRNGTDGLSYNGAIIVSGKQKDYRFSVVCNTKRLHCFPILMNIISNGLLQMFNHTQHIRIESSPFPLSHIGLWTGLPDGSFFLFLVLCSISPYITMGSISDYKKNAKSQLWISGLYTSAYWCGQALVDVSFFILILLLMYLIFYIENMQYLLITSQIVFALVIVTPGYAASLVFFIYMISFIFRKRRKNSGLWSFYFFFASTIMFSITLINHFDLSILITTMVLVPSYTLLGFKTFLEVRDQEHYREFPEANFELSATDFLVCFIPYFQTLLFVFVLRCMELKCGKKRMRKDPVFRISPQSRDAKPNPEEPIDEDEDIQTERIRTATALTTSILDEKPVIIASCLHKEYAGQKKSCFSKRKKKIAARNISFCVQEGEILGLLGPNGAGKSSSIRMISGITKPTAGEVELKGCSSVLGHLGYCPQENVLWPMLTLREHLEVYAAVKGLRKADARLAIARLVSAFKLHEQLNVPVQKLTAGITRKLCFVLSLLGNSPVLLLDEPSTGIDPTGQQQMWQAIQAVVKNTERGVLLTTHNLAEAEALCDRVAIMVSGRLRCIGSIQHLKNKLGKDYILELKVKETSQVTLVHTEILKLFPQAAGQERYSSLLTYKLPVADVYPLSQTFHKLEAVKHNFNLEEYSLSQCTLEKVFLELSKEQEVGNFDEEIDTTMRWKLLPHSDEP.

Residues 31–51 (LLEWGLSILLGLCIALFSSSM) form a helical membrane-spanning segment. Residues Asn84 and Asn109 are each glycosylated (N-linked (GlcNAc...) asparagine). Helical transmembrane passes span 222-242 (MFILFFLLHFSPLVYFISLNV), 268-288 (GLIYAGFIFIISIFVTIIITF), 297-317 (FMVIFILFFLYGLSLVALVFL), 327-347 (LTNLVVFLLTLFWGCLGFTVF), 355-375 (LEWILNICSPFAFTTGMIQII), and 397-417 (IATFSMLLLDGLIYLLLALYF). An ABC transporter 1 domain is found at 478–713 (IRIRNVKKEY…WGLGYHLSLH (236 aa)). 514–521 (GHSGAGKS) is an ATP binding site. A helical membrane pass occupies residues 854-874 (VLLTLLLVFGIAIFPLIVENI). The N-linked (GlcNAc...) asparagine glycan is linked to Asn940. The next 6 membrane-spanning stretches (helical) occupy residues 1007–1027 (IGLWTGLPDGSFFLFLVLCSI), 1062–1082 (ALVDVSFFILILLLMYLIFYI), 1094–1114 (IVFALVIVTPGYAASLVFFIY), 1127–1147 (SGLWSFYFFFASTIMFSITLI), 1150–1170 (FDLSILITTMVLVPSYTLLGF), and 1194–1214 (ATDFLVCFIPYFQTLLFVFVL). One can recognise an ABC transporter 2 domain in the interval 1288–1513 (GQKKSCFSKR…LGKDYILELK (226 aa)). 1320–1327 (GPNGAGKS) serves as a coordination point for ATP.

This sequence belongs to the ABC transporter superfamily. ABCA family. As to expression, widely expressed with higher expression in liver.

The protein localises to the golgi apparatus membrane. In terms of biological role, probable transporter which may play a role in macrophage lipid transport and homeostasis. The sequence is that of ATP-binding cassette sub-family A member 6 (ABCA6) from Homo sapiens (Human).